Here is a 123-residue protein sequence, read N- to C-terminus: Large ribosomal subunit protein uL24 (123 aa).

The protein belongs to the universal ribosomal protein uL24 family. Part of the 50S ribosomal subunit.

One of two assembly initiator proteins, it binds directly to the 5'-end of the 23S rRNA, where it nucleates assembly of the 50S subunit. Its function is as follows. Located at the polypeptide exit tunnel on the outside of the subunit. The protein is Large ribosomal subunit protein uL24 of Pyrobaculum aerophilum (strain ATCC 51768 / DSM 7523 / JCM 9630 / CIP 104966 / NBRC 100827 / IM2).